The following is a 330-amino-acid chain: Glycerol-3-phosphate dehydrogenase [NAD(P)+] 1 (330 aa).

NADPH-binding residues include tryptophan 15, arginine 35, and lysine 105. The sn-glycerol 3-phosphate site is built by lysine 105, glycine 133, and threonine 135. Alanine 137 contacts NADPH. Sn-glycerol 3-phosphate is bound by residues lysine 188, aspartate 241, serine 251, arginine 252, and asparagine 253. Lysine 188 functions as the Proton acceptor in the catalytic mechanism. NADPH is bound at residue arginine 252. Residues isoleucine 276 and glutamate 278 each contribute to the NADPH site.

Belongs to the NAD-dependent glycerol-3-phosphate dehydrogenase family.

It is found in the cytoplasm. It catalyses the reaction sn-glycerol 3-phosphate + NAD(+) = dihydroxyacetone phosphate + NADH + H(+). The catalysed reaction is sn-glycerol 3-phosphate + NADP(+) = dihydroxyacetone phosphate + NADPH + H(+). It functions in the pathway membrane lipid metabolism; glycerophospholipid metabolism. Functionally, catalyzes the reduction of the glycolytic intermediate dihydroxyacetone phosphate (DHAP) to sn-glycerol 3-phosphate (G3P), the key precursor for phospholipid synthesis. In Sphingopyxis alaskensis (strain DSM 13593 / LMG 18877 / RB2256) (Sphingomonas alaskensis), this protein is Glycerol-3-phosphate dehydrogenase [NAD(P)+] 1.